The chain runs to 473 residues: H(+)/Cl(-) exchange transporter ClcA (473 aa).

Topologically, residues 1–32 (MKTDTSTFLAQQIVRLRRRDQIRRLMQRDKTP) are cytoplasmic. Residues 33–69 (LAILFMAAVVGTLTGLVGVAFEKTVSWVQNMRIGALV) form a helical membrane-spanning segment. Residues 70–76 (QVADHAF) are Periplasmic-facing. A helical transmembrane segment spans residues 77–100 (LLWPLAFILSALLAMVGYFLVRKF). Residues 106 to 110 (GSGIP) carry the Selectivity filter part_1 motif. Residue Ser-107 participates in chloride binding. The segment at residues 109-116 (IPEIEGAL) is an intramembrane region (helical). Residues 117–123 (EELRPVR) are Cytoplasmic-facing. Helical transmembrane passes span 124 to 141 (WWRVLPVKFIGGMGTLGA) and 148 to 166 (EGPTVQIGGNLGRMVLDVF). The Selectivity filter part_2 signature appears at 146 to 150 (GREGP). The Cytoplasmic segment spans residues 167–176 (RMRSAEARHT). 2 consecutive intramembrane regions (helical) follow at residues 177 to 189 (LLATGAAAGLSAA) and 193 to 201 (PLAGILFII). Over 202–214 (EEMRPQFRYNLIS) the chain is Cytoplasmic. Residues 215–232 (IKAVFTGVIMSSIVFRIF) form a helical membrane-spanning segment. The Periplasmic portion of the chain corresponds to 233–252 (NGEAPIIEVGKLSDAPVNTL). A helical membrane pass occupies residues 253–281 (WLYLILGIIFGCVGPVFNSLVLRTQDMFQ). The Cytoplasmic segment spans residues 282–287 (RFHGGE). A helical transmembrane segment spans residues 288 to 309 (IKKWVLMGGAIGGLCGILGLIE). Residues 310 to 329 (PAAAGGGFNLIPIAAAGNFS) are Periplasmic-facing. The next 2 membrane-spanning stretches (helical) occupy residues 330 to 349 (VGLLLFIFITRVVTTLLCFS) and 355 to 376 (GIFAPMLALGTLLGTAFGMAAA). The Selectivity filter part_3 motif lies at 355-359 (GIFAP). The chloride site is built by Ile-356 and Phe-357. Over 377–386 (VLFPQYHLEA) the chain is Periplasmic. Positions 387-401 (GTFAIAGMGALMAAS) form an intramembrane region, helical. The segment at residues 402 to 404 (VRA) is an intramembrane region (note=Loop between two helices). Residues 405 to 416 (PLTGIVLVLEMT) constitute an intramembrane region (helical). Residues 417 to 421 (DNYQL) constitute an intramembrane region (note=Loop between two helices). A helical membrane pass occupies residues 422–438 (ILPMIITCLGATLLAQF). At 439–473 (LGGKPLYSTILARTLAKQDAEQAAKNQNAPAGENT) the chain is on the cytoplasmic side. A chloride-binding site is contributed by Tyr-445.

It belongs to the chloride channel (TC 2.A.49) family. ClcA subfamily. In terms of assembly, homodimer.

It localises to the cell inner membrane. The enzyme catalyses 2 chloride(in) + H(+)(out) = 2 chloride(out) + H(+)(in). Its function is as follows. Proton-coupled chloride transporter. Functions as antiport system and exchanges two chloride ions for 1 proton. Probably acts as an electrical shunt for an outwardly-directed proton pump that is linked to amino acid decarboxylation, as part of the extreme acid resistance (XAR) response. This chain is H(+)/Cl(-) exchange transporter ClcA, found in Salmonella typhi.